The sequence spans 250 residues: Ribonuclease HII (250 aa).

The 185-residue stretch at 66-250 folds into the RNase H type-2 domain; that stretch reads QLVAGVDEVG…SFAPVSEYEK (185 aa). Residues Asp-72, Glu-73, and Asp-164 each coordinate a divalent metal cation.

Belongs to the RNase HII family. Mn(2+) serves as cofactor. Requires Mg(2+) as cofactor.

Its subcellular location is the cytoplasm. It catalyses the reaction Endonucleolytic cleavage to 5'-phosphomonoester.. In terms of biological role, endonuclease that specifically degrades the RNA of RNA-DNA hybrids. The protein is Ribonuclease HII of Lactobacillus johnsonii (strain CNCM I-12250 / La1 / NCC 533).